A 1045-amino-acid chain; its full sequence is Septation initiation network scaffold protein cdc11 (1045 aa).

Positions 1–11 are enriched in basic and acidic residues; it reads MEQLWLEHDLS. 2 disordered regions span residues 1-269 and 282-329; these read MEQL…NTKD and RGRM…PSLS. Positions 18–39 are enriched in polar residues; the sequence is PQEQGSDNSSEPPTTSNVNNTQ. Low complexity-rich tracts occupy residues 40–52, 96–132, and 152–165; these read STGR…STEH, KQSP…NVSN, and ISSS…SEGS. Residues 166 to 176 are compositionally biased toward polar residues; sequence LKSQQSNTRSN. Residues 187 to 201 show a composition bias toward low complexity; that stretch reads ASNASSSSSVVSSPS. Composition is skewed to polar residues over residues 226-238 and 320-329; these read NQLT…NSFE and DSSNAFPSLS. Ser360 is modified (phosphoserine). Residues 377-417 are disordered; it reads DVGSSQSSSKTARLNSSPKSTLKTSSVKTRRSHSAQSSRKV. Residues 379-403 are compositionally biased toward polar residues; the sequence is GSSQSSSKTARLNSSPKSTLKTSSV. Ser558 carries the phosphoserine modification. 15 LRR repeats span residues 604–625, 627–646, 647–668, 669–690, 691–712, 713–734, 736–757, 758–779, 780–801, 802–822, 846–867, 868–889, 892–913, 914–935, and 940–962; these read RIIQ…SELC, SIEE…GCPV, TIRD…SNLL, NLQY…SSLI, HLRE…QHLD, GLLK…NSNL, RLEE…SSLQ, NLMV…QPMI, HLRI…QFPH, LRTL…RRLK, DIRN…HMFL, GVRY…IATS, NLRV…KPLQ, MIHR…CDIL, and QLNV…IDDS. Residues 1005-1043 form the LRRCT domain; sequence AWRTRRKMYAEAILLACPHLEWLDGSDVSQSSRAAFTKS.

In terms of assembly, interacts with sid4. When hyperphosphorylated, interacts with byr4. Also interacts with spg1, sid2, cdc13 and cdc16. In terms of processing, phosphorylated by cdc7 and cdk1. Hyperphosphorylated during anaphase. Dephosphorylated by par1.

It localises to the cytoplasm. The protein resides in the cytoskeleton. It is found in the microtubule organizing center. The protein localises to the spindle pole body. Its function is as follows. Essential for the onset of septum formation. Involved in the organization of astral microtubules during mitosis. Acts as a bridge between sid4 and the other SIN proteins mediating their association with the spindle pole body (SPB). The sid4-cdc11 complex organizes a signaling hub on the SPB which coordinates cell and nuclear division. This Schizosaccharomyces pombe (strain 972 / ATCC 24843) (Fission yeast) protein is Septation initiation network scaffold protein cdc11 (cdc11).